The sequence spans 67 residues: uncharacterized protein (67 aa).

This is an uncharacterized protein from Saccharomyces cerevisiae (strain ATCC 204508 / S288c) (Baker's yeast).